Consider the following 433-residue polypeptide: Protein translocase subunit SecY (433 aa).

The next 10 helical transmembrane spans lie at 17–37 (IVFT…PIPG), 71–91 (IFAL…LMSV), 117–137 (LTVL…ESIV), 141–161 (GPVV…TLVV), 184–204 (LIIF…MFEL), 212–232 (PLIA…IIFF), 268–288 (GVIP…LANF), 310–330 (YILL…AIVF), 366–386 (LTVI…LLMN), and 388–408 (YVIS…VVLD).

The protein belongs to the SecY/SEC61-alpha family. As to quaternary structure, component of the Sec protein translocase complex. Heterotrimer consisting of SecY, SecE and SecG subunits. The heterotrimers can form oligomers, although 1 heterotrimer is thought to be able to translocate proteins. Interacts with the ribosome. Interacts with SecDF, and other proteins may be involved. Interacts with SecA.

The protein resides in the cell inner membrane. The central subunit of the protein translocation channel SecYEG. Consists of two halves formed by TMs 1-5 and 6-10. These two domains form a lateral gate at the front which open onto the bilayer between TMs 2 and 7, and are clamped together by SecE at the back. The channel is closed by both a pore ring composed of hydrophobic SecY resides and a short helix (helix 2A) on the extracellular side of the membrane which forms a plug. The plug probably moves laterally to allow the channel to open. The ring and the pore may move independently. This is Protein translocase subunit SecY from Rickettsia conorii (strain ATCC VR-613 / Malish 7).